A 536-amino-acid chain; its full sequence is Inactive beta-amylase 9 (536 aa).

Serine 47 bears the Phosphoserine mark. The tract at residues 511 to 536 (QASEAEVEAETASIGSGTGAPSLQTA) is disordered.

The protein belongs to the glycosyl hydrolase 14 family. As to expression, mostly expressed in young floral buds, flowers and roots, and, to a later extent, in stems and leaves.

The protein localises to the cytoplasm. The polypeptide is Inactive beta-amylase 9 (BAM9) (Arabidopsis thaliana (Mouse-ear cress)).